We begin with the raw amino-acid sequence, 355 residues long: MSLLDRTLLEIFPQDSDSRDAAKARLDNLVMPHWALGDLMDLAIDLAGMQRTIKPLVDKRAIVTMAGDHGVAAEGVSKFPAEVTVQMVHAIIGGSAGVNALARSAGADVFVVDMGVNADLRDLVEQKKLINKKVGLGTGNIAKGPAMSRAMAVRAVEGGIDVAFALSTKYNIIGTGEMGIGNTTPSAAIAAVCTGKTVEEITGRGSGLNDAELQTKIDIIKKSIEINKPNSKDGLDILAKVGGFEIGGIAGLIIGCAAKKIPVVVDGYISTAGALIAAKIEPFVRDYLIFAHRSVEPGHVHMQEFLGCKRPLLDLNFRLGEGTGAAMAMNLVDGAKAILTDMSTFDEIAVTAPEK.

The active-site Proton acceptor is the glutamate 321.

The protein belongs to the CobT family.

The enzyme catalyses 5,6-dimethylbenzimidazole + nicotinate beta-D-ribonucleotide = alpha-ribazole 5'-phosphate + nicotinate + H(+). It participates in nucleoside biosynthesis; alpha-ribazole biosynthesis; alpha-ribazole from 5,6-dimethylbenzimidazole: step 1/2. Functionally, catalyzes the synthesis of alpha-ribazole-5'-phosphate from nicotinate mononucleotide (NAMN) and 5,6-dimethylbenzimidazole (DMB). This Desulfotalea psychrophila (strain LSv54 / DSM 12343) protein is Nicotinate-nucleotide--dimethylbenzimidazole phosphoribosyltransferase.